Consider the following 286-residue polypeptide: L-cysteine S-thiosulfotransferase subunit SoxA (286 aa).

Positions 1-27 (MKKTIQRGLFTGALVLMTAMTAKPANA) are cleaved as a signal peptide. A disulfide bridge links Cys-106 with Cys-137. The Cytochrome c domain maps to 180-286 (DAYMKGKKFF…LKYNGPASRK (107 aa)). Heme is bound by residues Cys-200 and His-204. Substrate is bound at residue Arg-243. Cys-247 lines the heme pocket. Residue Cys-247 is the Cysteine persulfide intermediate of the active site.

It belongs to the SoxA family. Heterodimer of SoxA and SoxX. The SoxAX complex interacts with CT1020, SoxAX-binding protein SaxB (SoxK); this interaction seems to be between SoxA and CT1020 and stimulates catalytic activity of the SoxAX complex. Heme is required as a cofactor. In terms of processing, cysteine persulfide at Cys-247.

Its subcellular location is the periplasm. The catalysed reaction is L-cysteinyl-[SoxY protein] + thiosulfate + 2 Fe(III)-[cytochrome c] = S-sulfosulfanyl-L-cysteinyl-[SoxY protein] + 2 Fe(II)-[cytochrome c] + 2 H(+). It carries out the reaction S-sulfanyl-L-cysteinyl-[SoxY protein] + thiosulfate + 2 Fe(III)-[cytochrome c] = S-(2-sulfodisulfanyl)-L-cysteinyl-[SoxY protein] + 2 Fe(II)-[cytochrome c] + 2 H(+). In terms of biological role, C-type monoheme cytochrome, which is part of the SoxAX cytochrome complex involved in sulfur oxidation. The SoxAX complex catalyzes the formation of a heterodisulfide bond between the conserved cysteine residue on a sulfur carrier SoxYZ complex subunit SoxY and thiosulfate or other inorganic sulfur substrates. This leads to the liberation of two electrons, which may be transferred from the SoxAX complex to another cytochrome c and which then may be used for reductive CO(2) fixation. The protein is L-cysteine S-thiosulfotransferase subunit SoxA of Chlorobaculum tepidum (strain ATCC 49652 / DSM 12025 / NBRC 103806 / TLS) (Chlorobium tepidum).